The chain runs to 671 residues: Preterminal protein (671 aa).

Positions 380–389 (RLPVRRRRRR) match the Nuclear localization signal motif. Residues 386–411 (RRRRVPPPPPPPEEEEGEALMEEEIE) are disordered. Acidic residues predominate over residues 397–411 (PEEEEGEALMEEEIE). Serine 580 is modified (O-(5'-phospho-DNA)-serine). The disordered stretch occupies residues 645 to 671 (GADVPLPPLPAGPEPPLPPGARPRHRF). A compositionally biased stretch (pro residues) spans 649–665 (PLPPLPAGPEPPLPPGA).

The protein belongs to the adenoviridae terminal protein family. In terms of assembly, heterodimer with the polymerase; this heterodimer binds to bp 9 to 18 of the genome. Interacts with host POU2F1; POU2F1 binds to the auxiliary sequences in the inverted terminal repeats and tethers the pTP-POL heterodimer to the origin DNA thereby participating in the assembly of the pre-initiation complex (POL-TP-DBP-NFIA-POU2F1). Preterminal protein is used to replicate viral genome, upon genomic encapsidation it is processed first into iTP and finally into TP by adenovirus protease.

It is found in the host nucleus matrix. Functionally, protein covalently bound to the viral DNA that acts as a primer for viral genomic replication by DNA strand displacement. Assembles on the viral origin of replication in an initiation complex with viral polymerase, DBP, host NFIA and host POU2F1/OCT1. During initiation, the polymerase covalently couples the first dCTP with Ser-580 of pTP. The terminal protein stimulates the template activity over 20 fold compared to protein-free templates. Neo-synthesized viral genomes are linked to two preterminal proteins, one for each 5' end. These new genomes are encapsidated in the nucleus, and during capsid maturation by viral protease, preterminal protein is first cleaved into intermediary (iTP), then into mature TP. May play a role in host nuclear matrix localization of genomic DNA. In Human adenovirus C serotype 5 (HAdV-5), this protein is Preterminal protein.